We begin with the raw amino-acid sequence, 397 residues long: Tryptophan synthase beta chain (397 aa).

Residue K87 is modified to N6-(pyridoxal phosphate)lysine.

The protein belongs to the TrpB family. Tetramer of two alpha and two beta chains. The cofactor is pyridoxal 5'-phosphate.

It catalyses the reaction (1S,2R)-1-C-(indol-3-yl)glycerol 3-phosphate + L-serine = D-glyceraldehyde 3-phosphate + L-tryptophan + H2O. Its pathway is amino-acid biosynthesis; L-tryptophan biosynthesis; L-tryptophan from chorismate: step 5/5. The beta subunit is responsible for the synthesis of L-tryptophan from indole and L-serine. This is Tryptophan synthase beta chain from Escherichia coli O45:K1 (strain S88 / ExPEC).